The primary structure comprises 299 residues: Acetylglutamate kinase (299 aa).

Residues 68 to 69 (GG), Arg90, and Asn194 contribute to the substrate site.

The protein belongs to the acetylglutamate kinase family. ArgB subfamily.

The protein resides in the cytoplasm. The catalysed reaction is N-acetyl-L-glutamate + ATP = N-acetyl-L-glutamyl 5-phosphate + ADP. The protein operates within amino-acid biosynthesis; L-arginine biosynthesis; N(2)-acetyl-L-ornithine from L-glutamate: step 2/4. Its function is as follows. Catalyzes the ATP-dependent phosphorylation of N-acetyl-L-glutamate. In Psychrobacter cryohalolentis (strain ATCC BAA-1226 / DSM 17306 / VKM B-2378 / K5), this protein is Acetylglutamate kinase.